The following is a 324-amino-acid chain: PGR5-like protein 1A, chloroplastic (324 aa).

Residues 1–60 (MGSKMLFSLTSPRLFSAVSRKPSSSFSPSPPSPSSRTQWTQLSPGKSISLRRRVFLLPAK) constitute a chloroplast transit peptide. The disordered stretch occupies residues 16-42 (SAVSRKPSSSFSPSPPSPSSRTQWTQL). Topologically, residues 61–198 (ATTEQSGPVG…KVYSDLAVDY (138 aa)) are stromal. The cysteines at positions 82 and 183 are disulfide-linked. A helical transmembrane segment spans residues 199-219 (FKMLLLNVPATVVALGLFFFL). Residues 220 to 236 (DDITGFEITYIMELPEP) are Lumenal, thylakoid-facing. A helical transmembrane segment spans residues 237-257 (YSFIFTWFAAVPVIVYLALSI). The Stromal segment spans residues 258 to 324 (TKLIIKDFLI…LITLPEGSQA (67 aa)).

It belongs to the PGR5 family. Homodimer and heterodimer with PGR5. Interacts with PGR5, FD2, petC, psaD1, LFNR1 and LFNR2. Also interacts with a Fe-containing cofactor (FCC). Disulfide bonds; Cys-300 and Cys-303 are probably involved in the formation of disulfide bridges with 'Cys-11' and 'Cys-105' of PGR5 while Cys-272 and Cys-275 are probably involved in the binding of a Fe-containing cofactor (FCC).

The protein localises to the plastid. It is found in the chloroplast thylakoid membrane. Inhibited by antimycin A. In terms of biological role, ferredoxin-plastoquinone reductase involved in cyclic electron flow (CEF) around photosystem I. The homodimer is probably not involved in CEF. The polypeptide is PGR5-like protein 1A, chloroplastic (PGRL1A) (Arabidopsis thaliana (Mouse-ear cress)).